The following is a 235-amino-acid chain: Uridylate kinase (235 aa).

Position 8 to 11 (8 to 11) interacts with ATP; it reads KFSG. The segment at 16-21 is involved in allosteric activation by GTP; it reads GAEGYG. G50 lines the UMP pocket. Positions 51 and 55 each coordinate ATP. UMP-binding positions include D71 and 132-139; that span reads TGNPYFTT. Positions 159, 165, and 168 each coordinate ATP.

This sequence belongs to the UMP kinase family. In terms of assembly, homohexamer.

It is found in the cytoplasm. It carries out the reaction UMP + ATP = UDP + ADP. It functions in the pathway pyrimidine metabolism; CTP biosynthesis via de novo pathway; UDP from UMP (UMPK route): step 1/1. Allosterically activated by GTP. Inhibited by UTP. Its function is as follows. Catalyzes the reversible phosphorylation of UMP to UDP. The polypeptide is Uridylate kinase (Aliarcobacter butzleri (strain RM4018) (Arcobacter butzleri)).